Reading from the N-terminus, the 523-residue chain is Sialate O-acetylesterase (523 aa).

A signal peptide spans 1-23; it reads MVAPGLVLGLVLPLILWADRSAG. 6 N-linked (GlcNAc...) asparagine glycosylation sites follow: Asn107, Asn138, Asn267, Asn290, Asn401, and Asn422.

It localises to the lysosome. The catalysed reaction is N-acetyl-9-O-acetylneuraminate + H2O = N-acetylneuraminate + acetate + H(+). It catalyses the reaction an Ac-O-9-sialoglycoconjugate + H2O = a sialoglycoconjugate + acetate + H(+). In terms of biological role, catalyzes the removal of O-acetyl ester groups from position 9 of the free diacetylated sialate N-acetyl-9-O-acetylneuraminate (Neu5,9Ac2) in the cytosol and of the diacetylated sialate residues of sialylglycoconjugates in the lysosomes. Together with the sialate-O-acetyltransferase they regulate the balance of acetylated sialoglycoconjugates, key players in various processes such as cell-cell interactions, host-pathogen recognition, and tumor antigenicity. The protein is Sialate O-acetylesterase (SIAE) of Pongo abelii (Sumatran orangutan).